The following is a 213-amino-acid chain: Probable chemoreceptor glutamine deamidase CheD (213 aa).

Residues 1 to 12 (MNRHRPHSHRSK) are compositionally biased toward basic residues. Residues 1–25 (MNRHRPHSHRSKPASTQDQPDSVRR) form a disordered region.

Belongs to the CheD family.

The catalysed reaction is L-glutaminyl-[protein] + H2O = L-glutamyl-[protein] + NH4(+). Probably deamidates glutamine residues to glutamate on methyl-accepting chemotaxis receptors (MCPs), playing an important role in chemotaxis. The sequence is that of Probable chemoreceptor glutamine deamidase CheD from Rhodopseudomonas palustris (strain BisA53).